Reading from the N-terminus, the 191-residue chain is Protein LURP-one-related 6 (191 aa).

This sequence belongs to the LOR family.

Its function is as follows. Might be related to the phospholipid scramblase and tubby-like superfamily of membrane tethered transcription factors. The protein is Protein LURP-one-related 6 of Arabidopsis thaliana (Mouse-ear cress).